Here is a 526-residue protein sequence, read N- to C-terminus: Protein translocase subunit SecD (526 aa).

Helical transmembrane passes span 8–28 (LIVFIFALLLGVGFSVPSLLE), 356–376 (IIALVGGFILVMGFMALYYSM), 379–399 (VIACMALVVNLFLIVAVMAIF), 405–425 (LPGMAGIVLTVGIAVDANIII), 453–473 (AIFDSNITSLIASVLLYAYGT), and 478–498 (GFALTTGIGILASIITAIIGT).

It belongs to the SecD/SecF family. SecD subfamily. Forms a complex with SecF. Part of the essential Sec protein translocation apparatus which comprises SecA, SecYEG and auxiliary proteins SecDF-YajC and YidC.

The protein localises to the cell inner membrane. In terms of biological role, part of the Sec protein translocase complex. Interacts with the SecYEG preprotein conducting channel. SecDF uses the proton motive force (PMF) to complete protein translocation after the ATP-dependent function of SecA. In Helicobacter pylori (strain J99 / ATCC 700824) (Campylobacter pylori J99), this protein is Protein translocase subunit SecD.